The chain runs to 270 residues: Vegetative storage protein 1 (270 aa).

The N-terminal stretch at 1–17 (MKILSLSLLLLLAATVS) is a signal peptide. N-linked (GlcNAc...) asparagine glycosylation is found at asparagine 115 and asparagine 215.

This sequence belongs to the APS1/VSP family. Expressed in leaves and in gynoecia, especially in styles, the basal and distal ends of ovaries and in siliques.

In terms of biological role, may function as somatic storage protein during early seedling development. The polypeptide is Vegetative storage protein 1 (VSP1) (Arabidopsis thaliana (Mouse-ear cress)).